The primary structure comprises 208 residues: uncharacterized protein (208 aa).

It to E.coli YfjJ.

This is an uncharacterized protein from Escherichia coli (strain K12).